The chain runs to 153 residues: Large ribosomal subunit protein uL22 (153 aa).

The segment at 125 to 153 (EPKEARQARKKAKSGRPAAAAKSETEKGA) is disordered.

Belongs to the universal ribosomal protein uL22 family. As to quaternary structure, part of the 50S ribosomal subunit.

Functionally, this protein binds specifically to 23S rRNA; its binding is stimulated by other ribosomal proteins, e.g. L4, L17, and L20. It is important during the early stages of 50S assembly. It makes multiple contacts with different domains of the 23S rRNA in the assembled 50S subunit and ribosome. The globular domain of the protein is located near the polypeptide exit tunnel on the outside of the subunit, while an extended beta-hairpin is found that lines the wall of the exit tunnel in the center of the 70S ribosome. The sequence is that of Large ribosomal subunit protein uL22 from Cutibacterium acnes (strain DSM 16379 / KPA171202) (Propionibacterium acnes).